The sequence spans 169 residues: Allophycocyanin subunit beta-18 (169 aa).

Asparagine 72 bears the N4-methylasparagine mark. Position 82 (cysteine 82) interacts with (2R,3E)-phycocyanobilin.

This sequence belongs to the phycobiliprotein family. As to quaternary structure, heterodimer of ApcE and this beta chain. Post-translationally, contains one covalently linked bilin chromophore.

The protein localises to the cellular thylakoid membrane. Functionally, a variant beta-allophycocyanin (AP) which forms a complex with ApcE, a phycobilisome terminal emitter that influences energy transfer to photosystem II. The chain is Allophycocyanin subunit beta-18 (apcF) from Synechocystis sp. (strain ATCC 27184 / PCC 6803 / Kazusa).